A 131-amino-acid polypeptide reads, in one-letter code: Small ribosomal subunit protein uS8 (131 aa).

This sequence belongs to the universal ribosomal protein uS8 family. As to quaternary structure, part of the 30S ribosomal subunit. Contacts proteins S5 and S12.

Its function is as follows. One of the primary rRNA binding proteins, it binds directly to 16S rRNA central domain where it helps coordinate assembly of the platform of the 30S subunit. The sequence is that of Small ribosomal subunit protein uS8 from Cupriavidus necator (strain ATCC 17699 / DSM 428 / KCTC 22496 / NCIMB 10442 / H16 / Stanier 337) (Ralstonia eutropha).